Consider the following 692-residue polypeptide: Elongation factor G (692 aa).

One can recognise a tr-type G domain in the interval 8 to 282 (ENTRNIGIMA…AVIDYLPSPL (275 aa)). Residues 17-24 (AHIDAGKT), 81-85 (DTPGH), and 135-138 (NKMD) contribute to the GTP site.

The protein belongs to the TRAFAC class translation factor GTPase superfamily. Classic translation factor GTPase family. EF-G/EF-2 subfamily.

The protein localises to the cytoplasm. Functionally, catalyzes the GTP-dependent ribosomal translocation step during translation elongation. During this step, the ribosome changes from the pre-translocational (PRE) to the post-translocational (POST) state as the newly formed A-site-bound peptidyl-tRNA and P-site-bound deacylated tRNA move to the P and E sites, respectively. Catalyzes the coordinated movement of the two tRNA molecules, the mRNA and conformational changes in the ribosome. The sequence is that of Elongation factor G from Bacillus cereus (strain G9842).